The following is a 178-amino-acid chain: Ribonuclease M5 (178 aa).

The 97-residue stretch at 4–100 (NEFIVVEGRD…KIGVEHADLI (97 aa)) folds into the Toprim domain. Mg(2+) contacts are provided by Glu-10, Asp-56, and Asp-58.

It belongs to the ribonuclease M5 family. Mg(2+) serves as cofactor.

The protein resides in the cytoplasm. The enzyme catalyses Endonucleolytic cleavage of RNA, removing 21 and 42 nucleotides, respectively, from the 5'- and 3'-termini of a 5S-rRNA precursor.. Functionally, required for correct processing of both the 5' and 3' ends of 5S rRNA precursor. Cleaves both sides of a double-stranded region yielding mature 5S rRNA in one step. This Staphylococcus aureus (strain NCTC 8325 / PS 47) protein is Ribonuclease M5.